Reading from the N-terminus, the 106-residue chain is Pyruvate decarboxylase 2 (106 aa).

Mg(2+) contacts are provided by Asn-10 and Gly-12.

This sequence belongs to the TPP enzyme family. In terms of assembly, homotetramer. It depends on a metal cation as a cofactor. Thiamine diphosphate serves as cofactor.

It carries out the reaction a 2-oxocarboxylate + H(+) = an aldehyde + CO2. The protein is Pyruvate decarboxylase 2 (PDC2) of Zea mays (Maize).